The sequence spans 534 residues: Phosphoenolpyruvate carboxykinase (ATP) (534 aa).

The substrate site is built by Arg-60, Tyr-195, and Lys-201. Residues Lys-201, His-221, and 237–245 contribute to the ATP site; that span reads GLSGTGKTT. Residues Lys-201 and His-221 each contribute to the Mn(2+) site. Residue Asp-258 participates in Mn(2+) binding. Positions 287, 324, and 449 each coordinate ATP. Arg-324 provides a ligand contact to substrate.

Belongs to the phosphoenolpyruvate carboxykinase (ATP) family. It depends on Mn(2+) as a cofactor.

Its subcellular location is the cytoplasm. The catalysed reaction is oxaloacetate + ATP = phosphoenolpyruvate + ADP + CO2. Its pathway is carbohydrate biosynthesis; gluconeogenesis. In terms of biological role, involved in the gluconeogenesis. Catalyzes the conversion of oxaloacetate (OAA) to phosphoenolpyruvate (PEP) through direct phosphoryl transfer between the nucleoside triphosphate and OAA. The chain is Phosphoenolpyruvate carboxykinase (ATP) from Flavobacterium johnsoniae (strain ATCC 17061 / DSM 2064 / JCM 8514 / BCRC 14874 / CCUG 350202 / NBRC 14942 / NCIMB 11054 / UW101) (Cytophaga johnsonae).